A 362-amino-acid polypeptide reads, in one-letter code: Chorismate synthase (362 aa).

NADP(+) is bound by residues Arg-47 and Arg-53. FMN-binding positions include 124–126 (RSS), Gly-285, 300–304 (KPTAT), and Arg-326.

It belongs to the chorismate synthase family. As to quaternary structure, homotetramer. The cofactor is FMNH2.

The enzyme catalyses 5-O-(1-carboxyvinyl)-3-phosphoshikimate = chorismate + phosphate. It participates in metabolic intermediate biosynthesis; chorismate biosynthesis; chorismate from D-erythrose 4-phosphate and phosphoenolpyruvate: step 7/7. Functionally, catalyzes the anti-1,4-elimination of the C-3 phosphate and the C-6 proR hydrogen from 5-enolpyruvylshikimate-3-phosphate (EPSP) to yield chorismate, which is the branch point compound that serves as the starting substrate for the three terminal pathways of aromatic amino acid biosynthesis. This reaction introduces a second double bond into the aromatic ring system. This Cyanothece sp. (strain PCC 7425 / ATCC 29141) protein is Chorismate synthase.